We begin with the raw amino-acid sequence, 161 residues long: Cell wall protein YLR042C (161 aa).

An N-terminal signal peptide occupies residues 1–24 (MKISQFGSLAFAPIVLLQLFIVQA). 3 N-linked (GlcNAc...) asparagine glycosylation sites follow: Asn77, Asn104, and Asn120. Positions 111-139 (FTPLPSSSRNETKSSQTTNTISSSTSTGG) are disordered. Residues 123–137 (KSSQTTNTISSSTST) show a composition bias toward low complexity. Gly139 carries the GPI-anchor amidated glycine lipid modification. The propeptide at 140–161 (VGSVKPCLYFVLMLETIAYLFS) is removed in mature form.

The GPI-anchor is attached to the protein in the endoplasmic reticulum and serves to target the protein to the cell surface. There, the glucosamine-inositol phospholipid moiety is cleaved off and the GPI-modified mannoprotein is covalently attached via its lipidless GPI glycan remnant to the 1,6-beta-glucan of the outer cell wall layer.

Its subcellular location is the secreted. The protein resides in the cell wall. It is found in the membrane. This chain is Cell wall protein YLR042C, found in Saccharomyces cerevisiae (strain ATCC 204508 / S288c) (Baker's yeast).